The following is a 558-amino-acid chain: Formate--tetrahydrofolate ligase (558 aa).

67-74 provides a ligand contact to ATP; that stretch reads TPAGEGKT.

Belongs to the formate--tetrahydrofolate ligase family.

It carries out the reaction (6S)-5,6,7,8-tetrahydrofolate + formate + ATP = (6R)-10-formyltetrahydrofolate + ADP + phosphate. Its pathway is one-carbon metabolism; tetrahydrofolate interconversion. This Ruegeria pomeroyi (strain ATCC 700808 / DSM 15171 / DSS-3) (Silicibacter pomeroyi) protein is Formate--tetrahydrofolate ligase.